A 234-amino-acid chain; its full sequence is Polycomb group RING finger protein 5-A (234 aa).

Residues 18-57 form an RING-type zinc finger; the sequence is CSICRGYLIKPTAVTECLHTFCKSCIVQHFEESNECPECG. Residues 97 to 130 form a disordered region; that stretch reads FWRKHKIKSNGEDGPRAKKSRLSGEDDDGNGGDY.

As to quaternary structure, component of a PRC1-like complex.

It is found in the nucleus. Its function is as follows. Component of Polycomb group (PcG) multiprotein complexes; the complex class is required to maintain the transcriptionally repressive state of some genes. This is Polycomb group RING finger protein 5-A from Danio rerio (Zebrafish).